The chain runs to 241 residues: DNA repair protein RecO (241 aa).

Belongs to the RecO family.

Involved in DNA repair and RecF pathway recombination. The chain is DNA repair protein RecO from Yersinia pseudotuberculosis serotype O:1b (strain IP 31758).